A 141-amino-acid chain; its full sequence is MAKKVEKLVKLQIPAGKATPAPPVGPALGQAGINIMGFTKEFNARTADQAGMIIPVVISVYEDKSFDFITKTPPAAVLLKKAAGVEKGSGTPNTTKVATVTRAQVQEIAETKMPDLNAANIEAAMRMIEGTARSMGFTVTD.

This sequence belongs to the universal ribosomal protein uL11 family. In terms of assembly, part of the ribosomal stalk of the 50S ribosomal subunit. Interacts with L10 and the large rRNA to form the base of the stalk. L10 forms an elongated spine to which L12 dimers bind in a sequential fashion forming a multimeric L10(L12)X complex. In terms of processing, one or more lysine residues are methylated.

Functionally, forms part of the ribosomal stalk which helps the ribosome interact with GTP-bound translation factors. In Streptococcus pyogenes serotype M1, this protein is Large ribosomal subunit protein uL11.